The primary structure comprises 299 residues: MADQLIRATAADDGIRAVGVITTRLTEDARQRHGLSYVATAALGRTMSAGLLLASSMKQAEARINLRIRGDGPLQGILVDAGLDGTVRGYVTNPGVELPPNAKGKLDVGGAVGKGFLYVIRDMGYGYPYSSTVELVSGEIGEDVTHYLVTSEQTPSALALGVFVGAQGVTASGGLLIQVLPKAAEDPALVELLESRLAHLQGFTPLLQAGKTLPDIFTDLLGDMGLKIFPQTQMVQFQCRCSTERVLGALKMLGQDELLDMIEKDDGAEATCDFCGEVYQVTSDQLGKLIDDLKTEAGA.

2 disulfides stabilise this stretch: Cys239-Cys241 and Cys272-Cys275.

Belongs to the HSP33 family. Under oxidizing conditions two disulfide bonds are formed involving the reactive cysteines. Under reducing conditions zinc is bound to the reactive cysteines and the protein is inactive.

It is found in the cytoplasm. Redox regulated molecular chaperone. Protects both thermally unfolding and oxidatively damaged proteins from irreversible aggregation. Plays an important role in the bacterial defense system toward oxidative stress. In Acaryochloris marina (strain MBIC 11017), this protein is 33 kDa chaperonin.